The sequence spans 5101 residues: Malformin synthetase mlfA (5101 aa).

Residues 225-616 are adenylation 1; sequence ERHAANRPHS…CGRADTQVKL (392 aa). Residues 757–830 enclose the Carrier 1 domain; the sequence is SRLEQKIQLA…EAASLAEVQE (74 aa). S791 carries the O-(pantetheine 4'-phosphoryl)serine modification. The tract at residues 868-1299 is condensation 1; it reads EDVFPCTTMQ…ALNTLSLLQA (432 aa). The adenylation 2 stretch occupies residues 1327–1716; sequence DRWVTRQPEG…GRKDTQVKLR (390 aa). The Carrier 2 domain maps to 1854–1931; the sequence is TPTLELERTL…QLAAEVGEPA (78 aa). S1891 is modified (O-(pantetheine 4'-phosphoryl)serine). Disordered regions lie at residues 1932 to 1961 and 1994 to 2020; these read GQSA…DGVD and GGSS…KKNA. Composition is skewed to low complexity over residues 1934 to 1958 and 1996 to 2013; these read SASS…STND and SSSN…SSSS. The tract at residues 2066–2481 is condensation 2; that stretch reads EDIYPATALQ…AVSCSDKETL (416 aa). Residues 2504-2896 form an adenylation 3 region; that stretch reads RRTPHAPAVC…IGRRDGQLKL (393 aa). Residues 3032 to 3108 enclose the Carrier 3 domain; that stretch reads RPVTSQEHEM…QLICHLNTIR (77 aa). S3069 carries the O-(pantetheine 4'-phosphoryl)serine modification. 2 condensation regions span residues 3125–3590 and 3611–4030; these read WVAL…TYDQ and NIYP…EHLV. The tract at residues 4055-4445 is adenylation 4; it reads HNSRQAVCAW…VGRKDNQIKF (391 aa). The Carrier 4 domain maps to 4579–4655; sequence MPSTAAERKM…DLSDQAKSLI (77 aa). At S4616 the chain carries O-(pantetheine 4'-phosphoryl)serine. The interval 4712-5097 is condensation 5; the sequence is IVVDIPGPID…KIVGLLRHPE (386 aa).

The protein belongs to the NRP synthetase family.

The protein operates within secondary metabolite biosynthesis. Its function is as follows. Nonribosomal peptide synthetase; part of the gene cluster that mediates the biosynthesis of malformins, cyclic pentapeptides with a disulfide bond between 2 consecutive cysteins, that show potential anti-tumor as well as antimalarial and antitrypanosomal properties. The nonribosomal peptide synthetase mlfA is responsible of the formation of the cyclic pentapeptide. The malformin biosynthesis clusters in malformin-producing fungi also contain enzymes involved in the formation of the disulfide bond between the two consecutive cysteins within malformins, in addition to additional tailoring enzymes such as methyltransferases or oxidoreductases. They are also composed of up to 4 major facilitator superfamily transporters, and transcription factors probably involved in the regulation of the expression of those clusters. The sequence is that of Malformin synthetase mlfA from Aspergillus kawachii (strain NBRC 4308) (White koji mold).